We begin with the raw amino-acid sequence, 146 residues long: VHLTDAEKAAISGLWGKVNADGVGAEALGRLLVVYPWTQRFFEHFGDLSSSSAVMGNAKVKSHGKKVITAFADGLKHLDNLKGTFSALSELHCDKLHVDPENFKLLGNMIVIVLSHDLGKDFTPDAQSAFQKVVTGVATALGHKYH.

The residue at position 1 (Val-1) is an N-acetylvaline. Residues 2–146 (HLTDAEKAAI…VATALGHKYH (145 aa)) form the Globin domain. Lys-59 is subject to N6-acetyllysine. His-63 contributes to the heme b binding site. N6-acetyllysine is present on Lys-82. His-92 provides a ligand contact to heme b. Cys-93 is subject to S-nitrosocysteine. Lys-144 bears the N6-acetyllysine mark.

The protein belongs to the globin family. Heterotetramer of two alpha chains and two beta chains. As to expression, red blood cells.

Its function is as follows. Involved in oxygen transport from the lung to the various peripheral tissues. The chain is Hemoglobin subunit beta (HBB) from Ondatra zibethicus (Muskrat).